Consider the following 297-residue polypeptide: Virulence genes transcriptional activator (297 aa).

Positions 1-61 (MDFLINKKLK…IRKNGTLIPT (61 aa)) constitute an HTH lysR-type domain. A DNA-binding region (H-T-H motif) is located at residues 21–40 (FSIATSVLYITRTPLSRVIS).

Belongs to the LysR transcriptional regulatory family.

Its subcellular location is the cytoplasm. In terms of biological role, positive regulator for the plasmid-encoded virulence factors SpvA, SpvB, and SpvC. The chain is Virulence genes transcriptional activator (mkaC) from Salmonella typhimurium (strain LT2 / SGSC1412 / ATCC 700720).